A 218-amino-acid polypeptide reads, in one-letter code: Probable WRKY transcription factor 12 (218 aa).

The span at Ser49–Ser63 shows a compositional bias: low complexity. Disordered regions lie at residues Ser49–Asn120 and His199–Phe218. Residues Thr64–Leu77 show a composition bias toward polar residues. Residues Ser105–Gly116 are compositionally biased toward low complexity. Residues Ser139 to Ser204 constitute a DNA-binding region (WRKY).

The protein belongs to the WRKY group II-c family.

It localises to the nucleus. Its function is as follows. Transcription factor. Interacts specifically with the W box (5'-(T)TGAC[CT]-3'), a frequently occurring elicitor-responsive cis-acting element. The protein is Probable WRKY transcription factor 12 (WRKY12) of Arabidopsis thaliana (Mouse-ear cress).